We begin with the raw amino-acid sequence, 226 residues long: ATP synthase F(0) complex subunit a (226 aa).

6 consecutive transmembrane segments (helical) span residues 11 to 31, 68 to 88, 97 to 117, 138 to 158, 164 to 184, and 189 to 209; these read APSM…SILF, WALM…LGLL, QLSM…ITGF, IPML…ALAV, ITAG…LINI, and AFIT…VALI.

Belongs to the ATPase A chain family. As to quaternary structure, component of the ATP synthase complex composed at least of ATP5F1A/subunit alpha, ATP5F1B/subunit beta, ATP5MC1/subunit c (homooctomer), MT-ATP6/subunit a, MT-ATP8/subunit 8, ATP5ME/subunit e, ATP5MF/subunit f, ATP5MG/subunit g, ATP5MK/subunit k, ATP5MJ/subunit j, ATP5F1C/subunit gamma, ATP5F1D/subunit delta, ATP5F1E/subunit epsilon, ATP5PF/subunit F6, ATP5PB/subunit b, ATP5PD/subunit d, ATP5PO/subunit OSCP. ATP synthase complex consists of a soluble F(1) head domain (subunits alpha(3) and beta(3)) - the catalytic core - and a membrane F(0) domain - the membrane proton channel (subunits c, a, 8, e, f, g, k and j). These two domains are linked by a central stalk (subunits gamma, delta, and epsilon) rotating inside the F1 region and a stationary peripheral stalk (subunits F6, b, d, and OSCP). Interacts with DNAJC30; interaction is direct.

It is found in the mitochondrion inner membrane. The catalysed reaction is H(+)(in) = H(+)(out). Functionally, subunit a, of the mitochondrial membrane ATP synthase complex (F(1)F(0) ATP synthase or Complex V) that produces ATP from ADP in the presence of a proton gradient across the membrane which is generated by electron transport complexes of the respiratory chain. ATP synthase complex consist of a soluble F(1) head domain - the catalytic core - and a membrane F(1) domain - the membrane proton channel. These two domains are linked by a central stalk rotating inside the F(1) region and a stationary peripheral stalk. During catalysis, ATP synthesis in the catalytic domain of F(1) is coupled via a rotary mechanism of the central stalk subunits to proton translocation. With the subunit c (ATP5MC1), forms the proton-conducting channel in the F(0) domain, that contains two crucial half-channels (inlet and outlet) that facilitate proton movement from the mitochondrial intermembrane space (IMS) into the matrix. Protons are taken up via the inlet half-channel and released through the outlet half-channel, following a Grotthuss mechanism. The chain is ATP synthase F(0) complex subunit a from Canis lupus familiaris (Dog).